We begin with the raw amino-acid sequence, 441 residues long: Amino-acid acetyltransferase (441 aa).

One can recognise an N-acetyltransferase domain in the interval 295 to 434 (EQVRRATIND…QALYNYQRRS (140 aa)).

Belongs to the acetyltransferase family. ArgA subfamily. In terms of assembly, homohexamer.

It localises to the cytoplasm. The enzyme catalyses L-glutamate + acetyl-CoA = N-acetyl-L-glutamate + CoA + H(+). It functions in the pathway amino-acid biosynthesis; L-arginine biosynthesis; N(2)-acetyl-L-ornithine from L-glutamate: step 1/4. In Serratia proteamaculans (strain 568), this protein is Amino-acid acetyltransferase.